The following is a 123-amino-acid chain: Small ribosomal subunit protein uS12c (123 aa).

The span at 1–16 (MPTIQQLIRNSRQPAE) shows a compositional bias: polar residues. The tract at residues 1-23 (MPTIQQLIRNSRQPAENRTKSPA) is disordered.

It belongs to the universal ribosomal protein uS12 family. As to quaternary structure, part of the 30S ribosomal subunit.

It is found in the plastid. The protein resides in the chloroplast. In terms of biological role, with S4 and S5 plays an important role in translational accuracy. Located at the interface of the 30S and 50S subunits. This chain is Small ribosomal subunit protein uS12c (rps12), found in Staurastrum punctulatum (Green alga).